Reading from the N-terminus, the 474-residue chain is tRNA-2-methylthio-N(6)-dimethylallyladenosine synthase (474 aa).

The 118-residue stretch at 3-120 folds into the MTTase N-terminal domain; it reads KKLLIKTWGC…LPEMIKQSQS (118 aa). Positions 12, 49, 83, 157, 161, and 164 each coordinate [4Fe-4S] cluster. One can recognise a Radical SAM core domain in the interval 143 to 375; that stretch reads RAEGATAFVS…QQQINAQAMR (233 aa). Positions 378–441 constitute a TRAM domain; the sequence is RLMLGTEQRV…ANSLRGEIVR (64 aa).

This sequence belongs to the methylthiotransferase family. MiaB subfamily. In terms of assembly, monomer. [4Fe-4S] cluster is required as a cofactor.

The protein resides in the cytoplasm. It catalyses the reaction N(6)-dimethylallyladenosine(37) in tRNA + (sulfur carrier)-SH + AH2 + 2 S-adenosyl-L-methionine = 2-methylsulfanyl-N(6)-dimethylallyladenosine(37) in tRNA + (sulfur carrier)-H + 5'-deoxyadenosine + L-methionine + A + S-adenosyl-L-homocysteine + 2 H(+). Catalyzes the methylthiolation of N6-(dimethylallyl)adenosine (i(6)A), leading to the formation of 2-methylthio-N6-(dimethylallyl)adenosine (ms(2)i(6)A) at position 37 in tRNAs that read codons beginning with uridine. The sequence is that of tRNA-2-methylthio-N(6)-dimethylallyladenosine synthase from Vibrio vulnificus (strain CMCP6).